Reading from the N-terminus, the 86-residue chain is Toxin Td1 (86 aa).

The signal sequence occupies residues 1–20 (MIRFILFISCFFLIGMVIEC). Positions 21 to 83 (KDGYLMEPNG…VWERATNRCG (63 aa)) constitute an LCN-type CS-alpha/beta domain. Disulfide bonds link Cys-31/Cys-82, Cys-35/Cys-57, Cys-43/Cys-63, and Cys-47/Cys-65. Lys-84 carries the post-translational modification Lysine amide.

As to expression, expressed by the venom gland.

The protein resides in the secreted. Its function is as follows. Beta toxins bind voltage-independently at site-4 of sodium channels (Nav) and shift the voltage of activation toward more negative potentials thereby affecting sodium channel activation and promoting spontaneous and repetitive firing. In Tityus discrepans (Venezuelan scorpion), this protein is Toxin Td1.